A 198-amino-acid polypeptide reads, in one-letter code: FMN-dependent NADH:quinone oxidoreductase (198 aa).

FMN-binding positions include Ser-10 and 16–18 (SIS).

It belongs to the azoreductase type 1 family. Homodimer. FMN is required as a cofactor.

The catalysed reaction is 2 a quinone + NADH + H(+) = 2 a 1,4-benzosemiquinone + NAD(+). The enzyme catalyses N,N-dimethyl-1,4-phenylenediamine + anthranilate + 2 NAD(+) = 2-(4-dimethylaminophenyl)diazenylbenzoate + 2 NADH + 2 H(+). Quinone reductase that provides resistance to thiol-specific stress caused by electrophilic quinones. In terms of biological role, also exhibits azoreductase activity. Catalyzes the reductive cleavage of the azo bond in aromatic azo compounds to the corresponding amines. This is FMN-dependent NADH:quinone oxidoreductase from Mycoplasmopsis pulmonis (strain UAB CTIP) (Mycoplasma pulmonis).